The sequence spans 154 residues: MRLVHAVLLPGIIVFVSNGNLLHAHALHEDETGVTAGRQLRAAASEVFGLSRASFGLGKAQDPLDKFFSKIIFSGKPIETSYSAKGIHEKIIEAHDLHVSKSKNAPIQYASVMEYLKKTYPGPDIERIVSTLERHDEVGAKDLGAKLRDALDRQ.

Positions 1-19 (MRLVHAVLLPGIIVFVSNG) are cleaved as a signal peptide. The RxLR motif lies at 38–41 (RQLR). A leucine heptad repeat region region spans residues 50–92 (LSRASFGLGKAQDPLDKFFSKIIFSGKPIETSYSAKGIHEKII). The single repeat region stretch occupies residues 93 to 103 (EAHDLHVSKSK). Positions 104–154 (NAPIQYASVMEYLKKTYPGPDIERIVSTLERHDEVGAKDLGAKLRDALDRQ) are highly variable C-terminus domain.

The protein belongs to the RxLR effector family.

It localises to the secreted. The protein resides in the host cytoplasm. Secreted effector that acts as an elicitor of hypersensitive response (HR) specifically on plants carrying defense protein RPP13. Recognition of ATR13 by RPP13 initiates defense responses that are effective against oomycete, bacterial and viral pathogens. The allele ATR13-Emco5 recognizes RPP13-Nd, the RPP13 defense protein from Arabidopsis thaliana ecotype Niederzenz. In Hyaloperonospora arabidopsidis (Peronospora arabidopsidis), this protein is Avirulence protein ATR13.